The following is a 140-amino-acid chain: Putative nickel-responsive regulator (140 aa).

Positions 81, 92, 94, and 100 each coordinate Ni(2+).

Belongs to the transcriptional regulatory CopG/NikR family. The cofactor is Ni(2+).

In terms of biological role, transcriptional regulator. The protein is Putative nickel-responsive regulator of Methanothrix thermoacetophila (strain DSM 6194 / JCM 14653 / NBRC 101360 / PT) (Methanosaeta thermophila).